The sequence spans 573 residues: Sulfate adenylyltransferase (573 aa).

The tract at residues 1-169 (MANPPHGGIL…VEAVNKLNHY (169 aa)) is N-terminal. Residues 170-394 (DYVGLRFTPA…LRESNPPRSK (225 aa)) form a catalytic region. Glutamine 197 provides a ligand contact to sulfate. Residues 197-200 (QTRN) and 291-294 (GRDH) each bind ATP. Active-site residues include threonine 198, arginine 199, and asparagine 200. Position 199 (arginine 199) interacts with sulfate. Alanine 295 serves as a coordination point for sulfate. Leucine 333 contacts ATP. The interval 395–573 (QGFTVFLTGY…LESQGFLEKA (179 aa)) is allosteric regulation domain; adenylyl-sulfate kinase-like. Residues 434–437 (DTVR), arginine 451, 477–478 (IA), and arginine 515 each bind 3'-phosphoadenylyl sulfate.

In the N-terminal section; belongs to the sulfate adenylyltransferase family. It in the C-terminal section; belongs to the APS kinase family. As to quaternary structure, homohexamer. Dimer of trimers.

The protein localises to the cytoplasm. It catalyses the reaction sulfate + ATP + H(+) = adenosine 5'-phosphosulfate + diphosphate. It participates in sulfur metabolism; hydrogen sulfide biosynthesis; sulfite from sulfate: step 1/3. Allosterically inhibited by 3'-phosphoadenosine 5'-phosphosulfate (PAPS). Its function is as follows. Catalyzes the first intracellular reaction of sulfate assimilation, forming adenosine-5'-phosphosulfate (APS) from inorganic sulfate and ATP. Plays an important role in sulfate activation as a component of the biosynthesis pathway of sulfur-containing amino acids. The protein is Sulfate adenylyltransferase of Coccidioides immitis (strain RS) (Valley fever fungus).